The sequence spans 687 residues: Protein-glutamine gamma-glutamyltransferase 2 (687 aa).

Alanine 2 bears the N-acetylalanine mark. Residue serine 60 is modified to Phosphoserine. Disulfide bonds link cysteine 230–cysteine 370 and cysteine 370–cysteine 371. Catalysis depends on residues cysteine 277, histidine 335, and aspartate 358. Residues asparagine 398, aspartate 400, glutamate 437, glutamate 447, and glutamate 452 each contribute to the Ca(2+) site. Lysine 468 is modified (N6-acetyllysine). 476 to 483 (RIRVGQSM) is a binding site for GTP. Glutamate 539 serves as a coordination point for Ca(2+). 580–583 (RDLY) is a binding site for GTP. Glutamine 633 is covalently cross-linked (Isoglutamyl lysine isopeptide (Gln-Lys) (interchain with K-?)).

This sequence belongs to the transglutaminase superfamily. Transglutaminase family. Monomer. Interacts with phospholipase C; promoting alpha-1 adrenergic receptor signaling. Interacts with PLCD1. In terms of assembly, homooligomer. Requires Ca(2+) as cofactor. In terms of processing, disulfide bond formation inactivates the calcium-dependent acyltransferase activity. Cys-370 can form disulfide bonds with both Cys-230 and Cys-371: formation of a disulfide bond between Cys-230 and Cys-370 facilitates formation of the disulfide between Cys-370 and Cys-371, which promotes inactivation of the acyltransferase activity. May also form interchain disulfids between Cys-230 and Cys-370. Ca(2+) protects against disulfide bond formation and inactivation. Auto-transglutaminated: Forms covalent cross-links mediated by transglutaminase between Gln-633 and the epsilon-amino group of a lysine residue of itself or HMGB1, forming homopolymers and heteropolymers, respectively. Post-translationally, S-nitrosylated, leading to inactivation of the acyltransferase activity.

It is found in the cytoplasm. The protein resides in the cytosol. The protein localises to the nucleus. Its subcellular location is the chromosome. It localises to the secreted. It is found in the extracellular space. The protein resides in the extracellular matrix. The protein localises to the cell membrane. Its subcellular location is the mitochondrion. It localises to the perinuclear region. It catalyses the reaction L-glutaminyl-[protein] + L-lysyl-[protein] = [protein]-L-lysyl-N(6)-5-L-glutamyl-[protein] + NH4(+). The enzyme catalyses L-glutaminyl-[protein] + serotonin = 5-serotonyl-L-glutamyl-[protein] + NH4(+). It carries out the reaction L-glutaminyl-[protein] + dopamine = 5-dopaminyl-L-glutamyl-[protein] + NH4(+). The catalysed reaction is L-glutaminyl-[protein] + histamine = 5-histaminyl-L-glutamyl-[protein] + NH4(+). It catalyses the reaction L-glutaminyl-[protein] + (R)-noradrenaline = 5-(R)-noradrenalinyl-L-glutamyl-[protein] + NH4(+). The enzyme catalyses L-glutaminyl-[protein] + H2O = L-glutamyl-[protein] + NH4(+). With respect to regulation, acyltransferase activity is regulated by the binding of GTP and Ca(2+): inactivated by GTP, which stabilizes its closed structure, thereby obstructing the accessibility of substrates to the active sites. In contrast, Ca(2+) acts as a cofactor by inducing conformational change to the active open form. In absence of Ca(2+), Mg(2+) may bind Ca(2+)-binding sites, promoting GTP-binding and subsequent inhibition of the acyltransferase activity. Extracellularly reduced and activated by CLIC3. Specifically inhibited by compound VA4 ((S)-Benzyl (6-Acrylamido-1-(4-((5-(dimethylamino)naphthalen-1-yl)sulfonyl)piperazin-1-yl)-1-oxohexan-2-yl)carbamate), which specifically abolishes both the transamidation and GTP-binding activities. Its function is as follows. Calcium-dependent acyltransferase that catalyzes the formation of covalent bonds between peptide-bound glutamine and various primary amines, such as gamma-amino group of peptide-bound lysine, or mono- and polyamines, thereby producing cross-linked or aminated proteins, respectively. Involved in many biological processes, such as bone development, angiogenesis, wound healing, cellular differentiation, chromatin modification and apoptosis. Acts as a protein-glutamine gamma-glutamyltransferase by mediating the cross-linking of proteins, such as ACO2, HSPB6, FN1, HMGB1, RAP1GDS1, SLC25A4/ANT1, SPP1 and WDR54. Under physiological conditions, the protein cross-linking activity is inhibited by GTP; inhibition is relieved by Ca(2+) in response to various stresses. When secreted, catalyzes cross-linking of proteins of the extracellular matrix, such as FN1 and SPP1 resulting in the formation of scaffolds. Plays a key role during apoptosis, both by (1) promoting the cross-linking of cytoskeletal proteins resulting in condensation of the cytoplasm, and by (2) mediating cross-linking proteins of the extracellular matrix, resulting in the irreversible formation of scaffolds that stabilize the integrity of the dying cells before their clearance by phagocytosis, thereby preventing the leakage of harmful intracellular components. In addition to protein cross-linking, can use different monoamine substrates to catalyze a vast array of protein post-translational modifications: mediates aminylation of serotonin, dopamine, noradrenaline or histamine into glutamine residues of target proteins to generate protein serotonylation, dopaminylation, noradrenalinylation or histaminylation, respectively. Mediates protein serotonylation of small GTPases during activation and aggregation of platelets, leading to constitutive activation of these GTPases. Plays a key role in chromatin organization by mediating serotonylation and dopaminylation of histone H3. Catalyzes serotonylation of 'Gln-5' of histone H3 (H3Q5ser) during serotonergic neuron differentiation, thereby facilitating transcription. Acts as a mediator of neurotransmission-independent role of nuclear dopamine in ventral tegmental area (VTA) neurons: catalyzes dopaminylation of 'Gln-5' of histone H3 (H3Q5dop), thereby regulating relapse-related transcriptional plasticity in the reward system. Regulates vein remodeling by mediating serotonylation and subsequent inactivation of ATP2A2/SERCA2. Also acts as a protein deamidase by mediating the side chain deamidation of specific glutamine residues of proteins to glutamate. Catalyzes specific deamidation of protein gliadin, a component of wheat gluten in the diet. May also act as an isopeptidase cleaving the previously formed cross-links. Also able to participate in signaling pathways independently of its acyltransferase activity: acts as a signal transducer in alpha-1 adrenergic receptor-mediated stimulation of phospholipase C-delta (PLCD) activity and is required for coupling alpha-1 adrenergic agonists to the stimulation of phosphoinositide lipid metabolism. Functionally, has cytotoxic activity: is able to induce apoptosis independently of its acyltransferase activity. This chain is Protein-glutamine gamma-glutamyltransferase 2, found in Homo sapiens (Human).